Consider the following 215-residue polypeptide: UPF0502 protein PputGB1_3531 (215 aa).

Belongs to the UPF0502 family.

The protein is UPF0502 protein PputGB1_3531 of Pseudomonas putida (strain GB-1).